The following is a 396-amino-acid chain: S-adenosylmethionine synthase (396 aa).

His16 lines the ATP pocket. Asp18 serves as a coordination point for Mg(2+). Residue Glu44 participates in K(+) binding. Residues Glu57 and Gln100 each contribute to the L-methionine site. The tract at residues Gln100–Arg110 is flexible loop. ATP contacts are provided by residues Asp165–Lys167, Asp240, Arg246–Lys247, Ala263, and Lys267. Position 240 (Asp240) interacts with L-methionine. Residue Lys271 coordinates L-methionine.

The protein belongs to the AdoMet synthase family. In terms of assembly, homotetramer; dimer of dimers. Mg(2+) serves as cofactor. K(+) is required as a cofactor.

It localises to the cytoplasm. It carries out the reaction L-methionine + ATP + H2O = S-adenosyl-L-methionine + phosphate + diphosphate. The protein operates within amino-acid biosynthesis; S-adenosyl-L-methionine biosynthesis; S-adenosyl-L-methionine from L-methionine: step 1/1. Functionally, catalyzes the formation of S-adenosylmethionine (AdoMet) from methionine and ATP. The overall synthetic reaction is composed of two sequential steps, AdoMet formation and the subsequent tripolyphosphate hydrolysis which occurs prior to release of AdoMet from the enzyme. The chain is S-adenosylmethionine synthase from Pseudomonas putida (strain W619).